The chain runs to 374 residues: Potassium channel subfamily K member 9 (374 aa).

Topologically, residues 1–8 are cytoplasmic; that stretch reads MKRQNVRT. Residues 9–29 traverse the membrane as a helical segment; that stretch reads LSLIVCTFTYLLVGAAVFDAL. Over 30 to 88 the chain is Extracellular; the sequence is ESDHEMREEEKLKAEEIRIKGKYNISSEDYRQLELVILQSEPHRAGVQWKFAGSFYFAI. An N-linked (GlcNAc...) asparagine glycan is attached at asparagine 53. The pore-forming intramembrane region spans 89–101; the sequence is TVITTIGYGHAAP. The K(+) site is built by threonine 93, isoleucine 94, glycine 95, and tyrosine 96. A selectivity filter 1 region spans residues 93-98; sequence TIGYGH. Residues 102-107 lie on the Extracellular side of the membrane; it reads GTDAGK. A helical membrane pass occupies residues 108–128; that stretch reads AFCMFYAVLGIPLTLVMFQSL. At 129–158 the chain is on the cytoplasmic side; that stretch reads GERMNTFVRYLLKRIKKCCGMRNTDVSMEN. The chain crosses the membrane as a helical span at residues 159–179; it reads MVTVGFFSCMGTLCIGAAAFS. Topologically, residues 180–194 are extracellular; that stretch reads QCEEWSFFHAYYYCF. Residues 195-207 constitute an intramembrane region (pore-forming); sequence ITLTTIGFGDYVA. Threonine 199, isoleucine 200, glycine 201, and phenylalanine 202 together coordinate K(+). A selectivity filter 2 region spans residues 199 to 204; the sequence is TIGFGD. Topologically, residues 208–218 are extracellular; it reads LQTKGALQKKP. Residues 219 to 239 form a helical membrane-spanning segment; that stretch reads LYVAFSFMYILVGLTVIGAFL. Over 240 to 374 the chain is Cytoplasmic; the sequence is NLVVLRFLTM…QRLMKRRKSV (135 aa). The interval 243-248 is X-gate; sequence VLRFLT.

This sequence belongs to the two pore domain potassium channel (TC 1.A.1.8) family. In terms of assembly, homodimer. Heterodimer with KCNK1. Heterodimer with KCNK3. As to expression, mainly found in the cerebellum. Also found in adrenal gland, kidney and lung.

Its subcellular location is the cell membrane. The protein localises to the mitochondrion inner membrane. It localises to the cell projection. It is found in the dendrite. The enzyme catalyses K(+)(in) = K(+)(out). It carries out the reaction Na(+)(in) = Na(+)(out). Inhibited by extracellular acidification adopting a nonconductive conformation at pH 6.0. Inhibited by phorbol 12-myristate 13-acetate (PMA). K(+) channel that conducts voltage-dependent outward rectifying currents upon membrane depolarization. Voltage sensing is coupled to K(+) electrochemical gradient in an 'ion flux gating' mode where outward but not inward ion flow opens the gate. Changes ion selectivity and becomes permeable to Na(+) ions in response to extracellular acidification. Protonation of the pH sensor His-98 stabilizes C-type inactivation conformation likely converting the channel from outward K(+)-conducting, to inward Na(+)-conducting to nonconductive state. Homo- and heterodimerizes to form functional channels with distinct regulatory and gating properties. Allows K(+) currents with fast-gating kinetics important for the repolarization and hyperpolarization phases of action potentials. In granule neurons, hyperpolarizes the resting membrane potential to limit intrinsic neuronal excitability, but once the action potential threshold is reached, supports high-frequency action potential firing and increased neuronal excitability. Homomeric and/or heteromeric KCNK3:KCNK9 channels operate in cerebellar granule cells, whereas heteromeric KCNK1:KCNK9 enables currents in hippocampal dentate gyrus granule neurons. Dispensable for central chemosensory respiration i.e. breathing controlled by brainstem CO2/pH, it rather conducts pH-sensitive currents and controls the firing rate of serotonergic raphe neurons involved in potentiation of the respiratory chemoreflex. In retinal ganglion cells, mediates outward currents that regulate action potentials in response to acidification of the synaptic cleft. Involved in transmission of image-forming and nonimage-forming visual information in the retina. In adrenal gland, contributes to the maintenance of a hyperpolarized resting membrane potential of aldosterone-producing cells at zona glomerulosa and limits aldosterone release as part of a regulatory mechanism that controls arterial blood pressure and electrolyte homeostasis. In Homo sapiens (Human), this protein is Potassium channel subfamily K member 9.